A 278-amino-acid polypeptide reads, in one-letter code: Large ribosomal subunit protein uL2 (278 aa).

Positions 222–278 (GVVMNPIDHPHGGGEGRTSGGRHPVTPWGKPTKGKKTRSNKSTDKFILISRHKRKKK) are disordered.

This sequence belongs to the universal ribosomal protein uL2 family. Part of the 50S ribosomal subunit. Forms a bridge to the 30S subunit in the 70S ribosome.

Functionally, one of the primary rRNA binding proteins. Required for association of the 30S and 50S subunits to form the 70S ribosome, for tRNA binding and peptide bond formation. It has been suggested to have peptidyltransferase activity; this is somewhat controversial. Makes several contacts with the 16S rRNA in the 70S ribosome. This Rhodopseudomonas palustris (strain BisB5) protein is Large ribosomal subunit protein uL2.